We begin with the raw amino-acid sequence, 106 residues long: Secreted RxLR effector protein 18 (106 aa).

The signal sequence occupies residues 1–17 (MRGSTAMLLAAIALFSS). The short motif at 28–39 (RTLRSFEELEER) is the RxLR-dEER element.

It belongs to the RxLR effector family.

It localises to the secreted. The protein resides in the host cell. Effector that may act as a suppressor of cell death to interrupt plant immunity. I. This is Secreted RxLR effector protein 18 from Plasmopara viticola (Downy mildew of grapevine).